We begin with the raw amino-acid sequence, 284 residues long: Undecaprenyl-diphosphatase 2 (284 aa).

Helical transmembrane passes span 6 to 26, 46 to 66, 94 to 114, 119 to 139, 183 to 203, 227 to 247, and 262 to 282; these read VIFI…EFIP, FAEM…VVLY, FGMN…LFYD, LFNL…LLVV, IMGG…SFFL, TLWI…IIVM, and FAVY…TNII.

The protein belongs to the UppP family.

It localises to the cell membrane. The enzyme catalyses di-trans,octa-cis-undecaprenyl diphosphate + H2O = di-trans,octa-cis-undecaprenyl phosphate + phosphate + H(+). Its function is as follows. Catalyzes the dephosphorylation of undecaprenyl diphosphate (UPP). Confers resistance to bacitracin. The chain is Undecaprenyl-diphosphatase 2 from Clostridioides difficile (strain 630) (Peptoclostridium difficile).